The chain runs to 647 residues: DNA mismatch repair protein MutL (647 aa).

The tract at residues 346-378 (QTVHAPRSAAPRVSERASDEPPAWQPSPTSGEP) is disordered.

Belongs to the DNA mismatch repair MutL/HexB family.

Functionally, this protein is involved in the repair of mismatches in DNA. It is required for dam-dependent methyl-directed DNA mismatch repair. May act as a 'molecular matchmaker', a protein that promotes the formation of a stable complex between two or more DNA-binding proteins in an ATP-dependent manner without itself being part of a final effector complex. The protein is DNA mismatch repair protein MutL of Limosilactobacillus fermentum (strain NBRC 3956 / LMG 18251) (Lactobacillus fermentum).